Here is a 201-residue protein sequence, read N- to C-terminus: ATP-dependent Clp protease proteolytic subunit 2 (201 aa).

The Nucleophile role is filled by S101. The active site involves H126.

Belongs to the peptidase S14 family. Fourteen ClpP subunits assemble into 2 heptameric rings which stack back to back to give a disk-like structure with a central cavity, resembling the structure of eukaryotic proteasomes.

Its subcellular location is the cytoplasm. The catalysed reaction is Hydrolysis of proteins to small peptides in the presence of ATP and magnesium. alpha-casein is the usual test substrate. In the absence of ATP, only oligopeptides shorter than five residues are hydrolyzed (such as succinyl-Leu-Tyr-|-NHMec, and Leu-Tyr-Leu-|-Tyr-Trp, in which cleavage of the -Tyr-|-Leu- and -Tyr-|-Trp bonds also occurs).. Cleaves peptides in various proteins in a process that requires ATP hydrolysis. Has a chymotrypsin-like activity. Plays a major role in the degradation of misfolded proteins. The chain is ATP-dependent Clp protease proteolytic subunit 2 from Prochlorococcus marinus subsp. pastoris (strain CCMP1986 / NIES-2087 / MED4).